Consider the following 122-residue polypeptide: uncharacterized protein (122 aa).

An N-terminal signal peptide occupies residues 1 to 28; the sequence is MVPGPPESVVRFFLWFCFLLPPTRKASC. A glycan (N-linked (GlcNAc...) asparagine) is linked at Asn49.

The protein resides in the secreted. This is an uncharacterized protein from Homo sapiens (Human).